The following is a 456-amino-acid chain: tRNA modification GTPase MnmE (456 aa).

Positions 24, 81, and 120 each coordinate (6S)-5-formyl-5,6,7,8-tetrahydrofolate. A TrmE-type G domain is found at 216–379 (GMTVVIAGRP…LRDHLKGCMG (164 aa)). A K(+)-binding site is contributed by Asn226. GTP is bound by residues 226 to 231 (NAGKSS), 245 to 251 (TDIAGTT), 270 to 273 (DTAG), and 335 to 338 (NKAD). Ser230 is a binding site for Mg(2+). Residues Thr245, Ile247, and Thr250 each contribute to the K(+) site. Thr251 is a binding site for Mg(2+). Position 456 (Lys456) interacts with (6S)-5-formyl-5,6,7,8-tetrahydrofolate.

This sequence belongs to the TRAFAC class TrmE-Era-EngA-EngB-Septin-like GTPase superfamily. TrmE GTPase family. As to quaternary structure, homodimer. Heterotetramer of two MnmE and two MnmG subunits. K(+) is required as a cofactor.

The protein resides in the cytoplasm. In terms of biological role, exhibits a very high intrinsic GTPase hydrolysis rate. Involved in the addition of a carboxymethylaminomethyl (cmnm) group at the wobble position (U34) of certain tRNAs, forming tRNA-cmnm(5)s(2)U34. This chain is tRNA modification GTPase MnmE, found in Pseudomonas putida (strain ATCC 47054 / DSM 6125 / CFBP 8728 / NCIMB 11950 / KT2440).